The primary structure comprises 559 residues: Suppressor of tumorigenicity 7 protein-like (559 aa).

Transmembrane regions (helical) follow at residues 39-59, 83-103, and 513-533; these read GLANSGSTLWFLAGLGLLYAL, FYVALTGTSSLISGLIFIFEW, and LPFFIHFTAGLCSSTAMIALL.

The protein belongs to the ST7 family.

It localises to the membrane. The protein is Suppressor of tumorigenicity 7 protein-like (St7l) of Rattus norvegicus (Rat).